A 156-amino-acid chain; its full sequence is Transcription antitermination protein NusB (156 aa).

It belongs to the NusB family.

Involved in transcription antitermination. Required for transcription of ribosomal RNA (rRNA) genes. Binds specifically to the boxA antiterminator sequence of the ribosomal RNA (rrn) operons. This Rickettsia conorii (strain ATCC VR-613 / Malish 7) protein is Transcription antitermination protein NusB.